The following is a 329-amino-acid chain: Large ribosomal subunit protein uL3 (329 aa).

It belongs to the universal ribosomal protein uL3 family. In terms of assembly, part of the 50S ribosomal subunit. Forms a cluster with proteins L14 and L24e.

Functionally, one of the primary rRNA binding proteins, it binds directly near the 3'-end of the 23S rRNA, where it nucleates assembly of the 50S subunit. The protein is Large ribosomal subunit protein uL3 of Picrophilus torridus (strain ATCC 700027 / DSM 9790 / JCM 10055 / NBRC 100828 / KAW 2/3).